Here is a 109-residue protein sequence, read N- to C-terminus: Protein reprimo (109 aa).

Asn7 and Asn18 each carry an N-linked (GlcNAc...) asparagine glycan. The chain crosses the membrane as a helical span at residues 56–76; the sequence is VVQIAVMCVLSLTVVFGIFFL. Ser98 is subject to Phosphoserine.

It belongs to the reprimo family.

The protein resides in the cytoplasm. It is found in the membrane. In terms of biological role, may be involved in the regulation of p53-dependent G2 arrest of the cell cycle. Seems to induce cell cycle arrest by inhibiting CDK1 activity and nuclear translocation of the CDC2 cyclin B1 complex. In Rattus norvegicus (Rat), this protein is Protein reprimo (Rprm).